The primary structure comprises 80 residues: Large ribosomal subunit protein bL31 (80 aa).

Zn(2+) is bound by residues cysteine 16, cysteine 18, cysteine 36, and cysteine 39.

It belongs to the bacterial ribosomal protein bL31 family. Type A subfamily. As to quaternary structure, part of the 50S ribosomal subunit. Zn(2+) serves as cofactor.

Its function is as follows. Binds the 23S rRNA. The chain is Large ribosomal subunit protein bL31 from Methylacidiphilum infernorum (isolate V4) (Methylokorus infernorum (strain V4)).